Consider the following 287-residue polypeptide: 3-alpha-hydroxysteroid sulfotransferase (287 aa).

44 to 49 (KSGTNW) lines the 3'-phosphoadenylyl sulfate pocket. The substrate site is built by W72 and W77. The active-site Proton acceptor is the H99. 3'-phosphoadenylyl sulfate is bound by residues R121, S129, Y184, 218–223 (SSFQFM), and 247–249 (RKG).

It belongs to the sulfotransferase 1 family. Homodimer. As to expression, adrenal gland and liver.

Its subcellular location is the cytoplasm. It carries out the reaction an alcohol + 3'-phosphoadenylyl sulfate = an alkyl sulfate + adenosine 3',5'-bisphosphate + H(+). Its function is as follows. Sulfotransferase that utilizes 3'-phospho-5'-adenylyl sulfate (PAPS) as sulfonate donor to catalyze the sulfonation of 3-alpha-hydroxyl groups of neutral steroids. The polypeptide is 3-alpha-hydroxysteroid sulfotransferase (STD1) (Cavia porcellus (Guinea pig)).